The primary structure comprises 163 residues: Transcription antitermination protein NusB (163 aa).

This sequence belongs to the NusB family.

Functionally, involved in transcription antitermination. Required for transcription of ribosomal RNA (rRNA) genes. Binds specifically to the boxA antiterminator sequence of the ribosomal RNA (rrn) operons. The chain is Transcription antitermination protein NusB from Chlorobium luteolum (strain DSM 273 / BCRC 81028 / 2530) (Pelodictyon luteolum).